Here is a 226-residue protein sequence, read N- to C-terminus: Triosephosphate isomerase (226 aa).

13-15 (NFK) is a substrate binding site. The active-site Electrophile is H97. Catalysis depends on E145, which acts as the Proton acceptor. Substrate-binding positions include I150, G185, and 206 to 207 (AS).

The protein belongs to the triosephosphate isomerase family. Homotetramer; dimer of dimers.

Its subcellular location is the cytoplasm. It catalyses the reaction D-glyceraldehyde 3-phosphate = dihydroxyacetone phosphate. It participates in carbohydrate biosynthesis; gluconeogenesis. Its pathway is carbohydrate degradation; glycolysis; D-glyceraldehyde 3-phosphate from glycerone phosphate: step 1/1. Involved in the gluconeogenesis. Catalyzes stereospecifically the conversion of dihydroxyacetone phosphate (DHAP) to D-glyceraldehyde-3-phosphate (G3P). The protein is Triosephosphate isomerase of Methanobacterium bryantii.